A 950-amino-acid chain; its full sequence is MGVPAFFRWLSRKYPSIIVNCVEEKPKECNGVKIPVDASKPNPNDVEFDNLYLDMNGIIHPCTHPEDKPAPKNEDEMMVAIFEYIDRLFSIVRPRRLLYMAIDGVAPRAKMNQQRSRRFRASKEGMEAAVEKQRVREEILAKGGFLPPEEIKERFDSNCITPGTEFMDNLAKCLRYYIADRLNNDPGWKNLTVILSDASAPGEGEHKIMDYIRRQRAQPNHDPNTHHCLCGADADLIMLGLATHEPNFTIIREEFKPNKPKPCGLCNQFGHEVKDCEGLLREKKVKHDELADSLPCAEGEFIFLRLNVLREYLERELTMASLPFTFDVERSIDDWVFMCFFVGNDFLPHLPSLEIRENAIDRLVNIYKNVVHKTGGYLTESGYVNLQRVQMIMLAVGEVEDSIFKKRKDDEDSFRRRQKEKRKRMKRDQPAFTPSGILTPHALGSRNSPGSQVASNPRQAAYEMRMQNNSSPSISPNTSFTSDGSPSPIGGIKRKAEDSDSEPEPEDNVRLWEAGWKQRYYKNKFDADAADEKFRRKVVQSYVEGLCWVLRYYYQGCASWKWYYPFHYAPFASDFEGIADMPSDFEKGTKPFKPLEQLMGVFPAASGNFLPPSWRKLMSDPDSSIIDFYPEDFAIDLNGKKYAWQGVALLPFVDERRLRAALEEVYPDLTPEETRRNSLGGDVLFVGKHHPLHDFILELYQTGSTEPVDVPPELCHGIQGKFSLDEEAILPDQIVCSPVPMLRDLTQNTVVSINFKDPQFAEDYIFKAVMLPGARKPAAVLKPSDWEKSSNGRQWKPQLGFNRDRRPVHLDQAAFRTLGHVMPRGSGTGIYSNAAPPPATYQGNLYRPLLRGQAQIPKLMSNMRPQDSWRGPPPLFQQQRFDRGVGAEPLLPWNRMLQTQNAAFQPNQYQMLAGPGGYPPRRDDRGGRQGYPREGRKYPLSPPSGRYNWN.

A CCHC-type zinc finger spans residues 261–278 (KPCGLCNQFGHEVKDCEG). Lys-286 is subject to N6-acetyllysine. The disordered stretch occupies residues 408–508 (KDDEDSFRRR…SDSEPEPEDN (101 aa)). The span at 416 to 426 (RRQKEKRKRMK) shows a compositional bias: basic residues. Residue Thr-439 is modified to Phosphothreonine. Polar residues predominate over residues 445-458 (SRNSPGSQVASNPR). Phosphoserine occurs at positions 448, 471, 473, 475, 482, 487, 499, 501, and 678. Positions 468–482 (NNSSPSISPNTSFTS) are enriched in low complexity. 3 positions are modified to asymmetric dimethylarginine; alternate: Arg-824, Arg-847, and Arg-851. An omega-N-methylarginine; alternate mark is found at Arg-824, Arg-847, and Arg-851. Arg-880 bears the Asymmetric dimethylarginine mark. Arg-883 is subject to Asymmetric dimethylarginine; alternate. Arg-883 carries the post-translational modification Omega-N-methylarginine; alternate. At Arg-895 the chain carries Omega-N-methylarginine. The tract at residues 912–950 (LAGPGGYPPRRDDRGGRQGYPREGRKYPLSPPSGRYNWN) is disordered. Basic and acidic residues predominate over residues 920–937 (PRRDDRGGRQGYPREGRK). Position 946 is an asymmetric dimethylarginine; alternate (Arg-946). Arg-946 bears the Omega-N-methylarginine; alternate mark.

Belongs to the 5'-3' exonuclease family. XRN2/RAT1 subfamily. As to quaternary structure, interacts with POLR2A and SMN1/SMN2. Interacts with CDKN2AIP and NKRF. Interacts with CDKN2AIPNL; the interaction is direct. Interacts with TRIM71 (via NHL repeats) in an RNA-dependent manner. Interacts with DHX34; the interaction is RNA-independent.

The protein localises to the nucleus. Its subcellular location is the nucleolus. In terms of biological role, possesses 5'-&gt;3' exoribonuclease activity. May promote the termination of transcription by RNA polymerase II. During transcription termination, cleavage at the polyadenylation site liberates a 5' fragment which is subsequently processed to form the mature mRNA and a 3' fragment which remains attached to the elongating polymerase. The processive degradation of this 3' fragment by this protein may promote termination of transcription. Binds to RNA polymerase II (RNAp II) transcription termination R-loops formed by G-rich pause sites. In Pongo abelii (Sumatran orangutan), this protein is 5'-3' exoribonuclease 2 (XRN2).